Here is a 199-residue protein sequence, read N- to C-terminus: Protein-methionine-sulfoxide reductase heme-binding subunit MsrQ (199 aa).

Helical transmembrane passes span 13 to 33, 79 to 99, 120 to 140, 147 to 167, and 169 to 189; these read VLLH…VDQG, LLGL…ALLE, LGVI…QIMM, WQKL…HYLW, and VKTL…LLLF.

This sequence belongs to the MsrQ family. Heterodimer of a catalytic subunit (MsrP) and a heme-binding subunit (MsrQ). FMN is required as a cofactor. The cofactor is heme b.

Its subcellular location is the cell inner membrane. Its function is as follows. Part of the MsrPQ system that repairs oxidized periplasmic proteins containing methionine sulfoxide residues (Met-O), using respiratory chain electrons. Thus protects these proteins from oxidative-stress damage caused by reactive species of oxygen and chlorine generated by the host defense mechanisms. MsrPQ is essential for the maintenance of envelope integrity under bleach stress, rescuing a wide series of structurally unrelated periplasmic proteins from methionine oxidation. MsrQ provides electrons for reduction to the reductase catalytic subunit MsrP, using the quinone pool of the respiratory chain. This chain is Protein-methionine-sulfoxide reductase heme-binding subunit MsrQ, found in Pectobacterium carotovorum subsp. carotovorum (strain PC1).